A 353-amino-acid polypeptide reads, in one-letter code: DNA polymerase IV (353 aa).

The UmuC domain maps to Ile-14–Gly-198. Residues Asp-18 and Asp-116 each contribute to the Mg(2+) site. Glu-117 is an active-site residue.

This sequence belongs to the DNA polymerase type-Y family. Monomer. Requires Mg(2+) as cofactor.

The protein localises to the cytoplasm. It carries out the reaction DNA(n) + a 2'-deoxyribonucleoside 5'-triphosphate = DNA(n+1) + diphosphate. Functionally, poorly processive, error-prone DNA polymerase involved in untargeted mutagenesis. Copies undamaged DNA at stalled replication forks, which arise in vivo from mismatched or misaligned primer ends. These misaligned primers can be extended by PolIV. Exhibits no 3'-5' exonuclease (proofreading) activity. May be involved in translesional synthesis, in conjunction with the beta clamp from PolIII. The chain is DNA polymerase IV from Streptococcus pneumoniae serotype 2 (strain D39 / NCTC 7466).